Consider the following 453-residue polypeptide: Ubiquitin-associated protein 1 (453 aa).

Residues 19 to 65 (LDDVPFKLNEKFRCPSKVGLPIGFCLSDCNAILSDLQYDFNLERRTV) form the UMA domain. A compositionally biased stretch (basic and acidic residues) spans 83-93 (EAIRTDSESER). Disordered regions lie at residues 83–119 (EAIR…QDIV), 189–223 (LQSQ…AKTG), and 260–335 (FPKL…AGTT). The segment covering 189-199 (LQSQPQSSVSP) has biased composition (low complexity). The span at 285 to 328 (NLSNGTPPSLQRTASNNNTTLPQEQPVFAQNGTPKQSNPVTVTS) shows a compositional bias: polar residues. 2 UBA domains span residues 340 to 381 (SPSE…LFTH) and 403 to 449 (GSEE…LMTR).

In terms of assembly, component of an ESCRT-I complex (endosomal sorting complex required for transport I).

The protein localises to the cytoplasm. The protein resides in the cytosol. Its subcellular location is the endosome. Functionally, component of the ESCRT-I complex, a regulator of vesicular trafficking process. Binds to ubiquitinated cargo proteins and is required for the sorting of endocytic ubiquitinated cargos into multivesicular bodies (MVBs). This Danio rerio (Zebrafish) protein is Ubiquitin-associated protein 1.